The following is a 1155-amino-acid chain: Probable translation initiation factor IF-2 (1155 aa).

One can recognise a DOD-type homing endonuclease domain in the interval 237–367 (FAGVMFGDGC…LSILLLRFEI (131 aa)). One can recognise a tr-type G domain in the interval 561–781 (TTETHNFIAN…VAGLAQKFLE (221 aa)). Residues 634–638 (DTPGH) and 688–691 (NKID) contribute to the GTP site.

It belongs to the TRAFAC class translation factor GTPase superfamily. Classic translation factor GTPase family. IF-2 subfamily. This protein undergoes a protein self splicing that involves a post-translational excision of the intervening region (intein) followed by peptide ligation.

Functionally, function in general translation initiation by promoting the binding of the formylmethionine-tRNA to ribosomes. Seems to function along with eIF-2. The sequence is that of Probable translation initiation factor IF-2 (infB) from Methanocaldococcus jannaschii (strain ATCC 43067 / DSM 2661 / JAL-1 / JCM 10045 / NBRC 100440) (Methanococcus jannaschii).